The sequence spans 376 residues: MKKGRVLVAMSGGIDSSITALLLHEQGYEIVGLTMKTWDYVSSGGRKKETGCCSLDSINDARNVAVSLGFPHIILDIREEFGDYVISNFTSEYLAGRTPNPCVLCNTHIKWDALLRRADKLNCEYIATGHYANIRHENGRYIVSRGKDLNKDQSYALWGVSQESLSRTLLPLGVFTKPEIREIASQRGFKELVTKSESYEICFIPDNDYRGFLKRRVDNLEEQVKGGEFVLEDGTVVGHHEGYPFYTVGQRKGLGITLGYPVYVTEIQADKNRVVLGTFDELARDGMYVHKLNMGKYPDLQGRRLDSVTKVRYNDPGSPAVLEQDGDIMKVFFGKGVHAIAPGQAAVFYEGDDVIGGGWIKASFKQPAFKKYNFSQ.

Residues 9-16 (AMSGGIDS) and Met35 each bind ATP. The Nucleophile role is filled by Cys105. Cys105 and Cys202 form a disulfide bridge. Gly129 provides a ligand contact to ATP. Residues 151–153 (KDQ) are interaction with tRNA. Residue Cys202 is the Cysteine persulfide intermediate of the active site. The interaction with tRNA stretch occupies residues 312–313 (RY).

This sequence belongs to the MnmA/TRMU family.

The protein localises to the cytoplasm. The enzyme catalyses S-sulfanyl-L-cysteinyl-[protein] + uridine(34) in tRNA + AH2 + ATP = 2-thiouridine(34) in tRNA + L-cysteinyl-[protein] + A + AMP + diphosphate + H(+). Functionally, catalyzes the 2-thiolation of uridine at the wobble position (U34) of tRNA, leading to the formation of s(2)U34. This Amoebophilus asiaticus (strain 5a2) protein is tRNA-specific 2-thiouridylase MnmA.